Here is a 177-residue protein sequence, read N- to C-terminus: TRAF-interacting protein with FHA domain-containing protein A (177 aa).

One can recognise an FHA domain in the interval 48 to 104 (VAFGRDYNVCRYPLLSNRVSRIQFNLQFFKHFNCSTTAIEIKNLSKKNKLYVDNLEL).

Belongs to the TIFA family. In terms of assembly, interacts with traf6.

The protein resides in the cytoplasm. In terms of biological role, adapter molecule that plays a key role in the activation of pro-inflammatory NF-kappa-B signaling following detection of bacterial pathogen-associated molecular pattern metabolites (PAMPs). Promotes activation of an innate immune response by inducing the oligomerization and polyubiquitination of TRAF6, which leads to the activation of TAK1 and IKK through a proteasome-independent mechanism. This is TRAF-interacting protein with FHA domain-containing protein A from Xenopus tropicalis (Western clawed frog).